We begin with the raw amino-acid sequence, 86 residues long: Small ribosomal subunit protein bS20 (86 aa).

Residues 1 to 11 (MANIKSQIKRN) are compositionally biased toward polar residues. The segment at 1-20 (MANIKSQIKRNLTNEKRHQA) is disordered.

It belongs to the bacterial ribosomal protein bS20 family.

Functionally, binds directly to 16S ribosomal RNA. This chain is Small ribosomal subunit protein bS20, found in Acholeplasma laidlawii (strain PG-8A).